The sequence spans 465 residues: Deoxyguanosinetriphosphate triphosphohydrolase-like protein (465 aa).

Positions 1 to 22 are disordered; sequence MKWDKLLNDKRRRESGVTRSKN. The 190-residue stretch at 63-252 folds into the HD domain; the sequence is RLTHSMEVST…LEVADDIAYL (190 aa).

This sequence belongs to the dGTPase family. Type 3 subfamily.

This is Deoxyguanosinetriphosphate triphosphohydrolase-like protein from Listeria monocytogenes serovar 1/2a (strain ATCC BAA-679 / EGD-e).